Consider the following 182-residue polypeptide: Large ribosomal subunit protein uL5 (182 aa).

The protein belongs to the universal ribosomal protein uL5 family. As to quaternary structure, part of the 50S ribosomal subunit; part of the 5S rRNA/L5/L18/L25 subcomplex. Contacts the 5S rRNA and the P site tRNA. Forms a bridge to the 30S subunit in the 70S ribosome.

This is one of the proteins that bind and probably mediate the attachment of the 5S RNA into the large ribosomal subunit, where it forms part of the central protuberance. In the 70S ribosome it contacts protein S13 of the 30S subunit (bridge B1b), connecting the 2 subunits; this bridge is implicated in subunit movement. Contacts the P site tRNA; the 5S rRNA and some of its associated proteins might help stabilize positioning of ribosome-bound tRNAs. The sequence is that of Large ribosomal subunit protein uL5 from Acidobacterium capsulatum (strain ATCC 51196 / DSM 11244 / BCRC 80197 / JCM 7670 / NBRC 15755 / NCIMB 13165 / 161).